The chain runs to 320 residues: Heterogeneous nuclear ribonucleoprotein A1 (320 aa).

Met-1 is modified (N-acetylmethionine). Ser-2 bears the N-acetylserine; in Heterogeneous nuclear ribonucleoprotein A1, N-terminally processed mark. Phosphoserine is present on Ser-2. An N6-acetyllysine; alternate modification is found at Lys-3. Lys-3 is covalently cross-linked (Glycyl lysine isopeptide (Lys-Gly) (interchain with G-Cter in SUMO2); alternate). Residues Ser-4 and Ser-6 each carry the phosphoserine modification. Residues 4-94 (SESPKEPEQL…EPKRAVSRED (91 aa)) are globular A domain. Lys-8 is covalently cross-linked (Glycyl lysine isopeptide (Lys-Gly) (interchain with G-Cter in SUMO2)). 2 consecutive RRM domains span residues 14 to 97 (RKLF…DSQR) and 105 to 184 (KKIF…LCKQ). Ser-22 is subject to Phosphoserine. Residue Lys-78 forms a Glycyl lysine isopeptide (Lys-Gly) (interchain with G-Cter in SUMO2) linkage. A globular B domain region spans residues 95–185 (SQRPGAHLTV…EVRKALCKQE (91 aa)). Lys-113 is covalently cross-linked (Glycyl lysine isopeptide (Lys-Gly) (interchain with G-Cter in SUMO)). Glycyl lysine isopeptide (Lys-Gly) (interchain with G-Cter in SUMO2) cross-links involve residues Lys-179 and Lys-183. Residues 188 to 216 (SASSSQRGRSGSGNFGGGRGGGFGGNDNF) are disordered. Ser-192 is subject to Phosphoserine; by MKNK2. Arg-194 is modified (asymmetric dimethylarginine; alternate). A Dimethylated arginine; alternate modification is found at Arg-194. Arg-194 is modified (omega-N-methylarginine; alternate). Residues 197–216 (SGSGNFGGGRGGGFGGNDNF) show a composition bias toward gly residues. Ser-199 is subject to Phosphoserine. 4 positions are modified to asymmetric dimethylarginine; alternate: Arg-206, Arg-218, Arg-225, and Arg-232. Arg-206 is subject to Dimethylated arginine; alternate. An omega-N-methylarginine; alternate mark is found at Arg-206, Arg-218, Arg-225, and Arg-232. Residues 218–240 (RGGNFSGRGGFGGSRGGGGYGGS) form an RNA-binding RGG-box region. Arg-225 is subject to Dimethylated arginine; alternate. Residues 268–305 (NQSSNFGPMKGGNFGGRSSGPYGGGGQYFAKPRNQGGY) form a nuclear targeting sequence region. The tract at residues 271–320 (SNFGPMKGGNFGGRSSGPYGGGGQYFAKPRNQGGYGGSSSSSSYGSGRRF) is disordered. Over residues 276–294 (MKGGNFGGRSSGPYGGGGQ) the composition is skewed to gly residues. At Arg-284 the chain carries Omega-N-methylarginine. Ser-285 carries the phosphoserine modification. N6-acetyllysine; alternate is present on Lys-298. A Glycyl lysine isopeptide (Lys-Gly) (interchain with G-Cter in SUMO2); alternate cross-link involves residue Lys-298. Position 300 is an omega-N-methylarginine (Arg-300). A compositionally biased stretch (low complexity) spans 308-320 (SSSSSSYGSGRRF). Ser-309 carries the phosphoserine modification. A phosphoserine; by MKNK2 mark is found at Ser-310, Ser-311, and Ser-312. Phosphoserine occurs at positions 313 and 316. Arg-318 is subject to Omega-N-methylarginine.

In terms of assembly, identified in the spliceosome C complex. Identified in a IGF2BP1-dependent mRNP granule complex containing untranslated mRNAs. Interacts with SEPT6. Interacts with C9orf72. Interacts with KHDRBS1. Interacts with UBQLN2. Interacts with PPIA/CYPA. Post-translationally, sumoylated.

Its subcellular location is the nucleus. It is found in the cytoplasm. In terms of biological role, involved in the packaging of pre-mRNA into hnRNP particles, transport of poly(A) mRNA from the nucleus to the cytoplasm and modulation of splice site selection. Plays a role in the splicing of pyruvate kinase PKM by binding repressively to sequences flanking PKM exon 9, inhibiting exon 9 inclusion and resulting in exon 10 inclusion and production of the PKM M2 isoform. Binds to the IRES and thereby inhibits the translation of the apoptosis protease activating factor APAF1. May bind to specific miRNA hairpins. The protein is Heterogeneous nuclear ribonucleoprotein A1 (Hnrnpa1) of Rattus norvegicus (Rat).